We begin with the raw amino-acid sequence, 87 residues long: MYCLQWLLPVLLIPKPLNPALWFSHSMFMGFYLLSFLLERKPCTICALVFLAALFLICYSCWGNCFLYHCSDSPLPESAHDPGVVGT.

A run of 2 helical transmembrane segments spans residues 19-39 (PALW…FLLE) and 43-63 (CTIC…SCWG).

It belongs to the BLCAP family. As to quaternary structure, interacts with RB1 (phosphorylated and unphosphorylated). Interacts with STAT3; the interaction is promoted by cell stimulation with IL6 and phosphorylation of STAT3.

It is found in the cytoplasm. Its subcellular location is the nucleus. The protein resides in the membrane. Its function is as follows. Acts as a tumor suppressor; induces growth arrest at G(1)/S checkpoint and apoptosis via RB1-dependent and p53/TP53- and NF-kappa-B-independent mechanisms. Modulates expression of genes involved in the regulation of proliferation, cell cycle and apoptosis. This is Apoptosis inducing factor BLCAP (BLCAP) from Bos taurus (Bovine).